We begin with the raw amino-acid sequence, 886 residues long: Receptor-like kinase TMK2 (886 aa).

A signal peptide spans 1–20 (MIAKNFLLLLCFIALVNVES). The Extracellular segment spans residues 21-460 (SPDEAVMIAL…GKKASSNAGK (440 aa)). The N-linked (GlcNAc...) asparagine glycan is linked to N41. A disulfide bridge connects residues C48 and C56. 10 LRR repeats span residues 59–83 (SNRV…LGKL), 84–106 (TSLT…LAGL), 107–129 (KSLV…FFSG), 131–155 (SSLQ…LENA), 157–179 (SLVD…LFEG), 182–206 (FSSL…FSDS), 208–232 (VQVL…LQKM), 233–254 (TSLT…DFSG), 255–279 (LVSL…LFEL), and 281–302 (SLSD…FTAP). N154, N167, and N202 each carry an N-linked (GlcNAc...) asparagine glycan. Residue N237 is glycosylated (N-linked (GlcNAc...) asparagine). An N-linked (GlcNAc...) asparagine glycan is attached at N298. Cystine bridges form between C315/C323 and C353/C361. LRR repeat units follow at residues 363-386 (GTDI…RFAD), 387-410 (FASL…ELAK), and 411-438 (LSNL…IVNT). 5 N-linked (GlcNAc...) asparagine glycosylation sites follow: N377, N394, N401, N432, and N437. A helical transmembrane segment spans residues 461-481 (IVGSVIGILLALLLIGVAIFF). The Cytoplasmic portion of the chain corresponds to 482 to 886 (LVKKKMQYHK…ESTFKSGQGR (405 aa)). The Protein kinase domain occupies 547-827 (FDEKNILGRG…HVVNVLVSLV (281 aa)). ATP-binding positions include 553–561 (LGRGGFGIV) and K575. The active-site Proton acceptor is D676.

The protein belongs to the protein kinase superfamily. Ser/Thr protein kinase family. In terms of tissue distribution, expressed in siliques and flowers.

The protein localises to the membrane. It carries out the reaction L-seryl-[protein] + ATP = O-phospho-L-seryl-[protein] + ADP + H(+). The catalysed reaction is L-threonyl-[protein] + ATP = O-phospho-L-threonyl-[protein] + ADP + H(+). Involved in auxin signal transduction and cell expansion and proliferation regulation. The chain is Receptor-like kinase TMK2 from Arabidopsis thaliana (Mouse-ear cress).